A 181-amino-acid polypeptide reads, in one-letter code: Large ribosomal subunit protein uL6 (181 aa).

Belongs to the universal ribosomal protein uL6 family. As to quaternary structure, part of the 50S ribosomal subunit.

This protein binds to the 23S rRNA, and is important in its secondary structure. It is located near the subunit interface in the base of the L7/L12 stalk, and near the tRNA binding site of the peptidyltransferase center. This is Large ribosomal subunit protein uL6 from Flavobacterium psychrophilum (strain ATCC 49511 / DSM 21280 / CIP 103535 / JIP02/86).